Here is a 202-residue protein sequence, read N- to C-terminus: Apolipoprotein R (202 aa).

A signal peptide spans 1–28 (MPPNLQRIFPALCLLGVLFLLHCTPVLC). 2 consecutive Sushi domains span residues 29–87 (GCDN…QCKA) and 88–145 (LCPK…KCEW). 4 cysteine pairs are disulfide-bonded: Cys-30/Cys-73, Cys-59/Cys-85, Cys-89/Cys-130, and Cys-116/Cys-143.

In terms of assembly, forms high molecular weight disulfide-linked complexes. As to expression, plasma. Found on very low-density lipoprotein (VLDL), on chylomicrons, and in the D &gt; 1.21 g/ml fraction of pig plasma. Found in liver, spleen, lung, bone marrow and lymph node.

It localises to the secreted. Its function is as follows. May be a lipoprotein-borne regulator of either the coagulation or the complement cascades. In Sus scrofa (Pig), this protein is Apolipoprotein R (APOR).